An 82-amino-acid polypeptide reads, in one-letter code: Large ribosomal subunit protein bL27 (82 aa).

Residues 1 to 54 (MAHKKGQGASRNGRDSESKRLGMKVGAGQRVSTGSILVRQRGTKWHPSQNVGRG) form a disordered region.

Belongs to the bacterial ribosomal protein bL27 family.

In Chlamydia caviae (strain ATCC VR-813 / DSM 19441 / 03DC25 / GPIC) (Chlamydophila caviae), this protein is Large ribosomal subunit protein bL27.